Consider the following 790-residue polypeptide: Valine--tRNA ligase (790 aa).

The 'HIGH' region signature appears at 40-50; it reads PTVSGKMHMGH. A 'KMSKS' region motif is present at residues 521–525; sequence KMSKS. Residue Lys524 participates in ATP binding.

Belongs to the class-I aminoacyl-tRNA synthetase family. ValS type 2 subfamily.

It is found in the cytoplasm. The enzyme catalyses tRNA(Val) + L-valine + ATP = L-valyl-tRNA(Val) + AMP + diphosphate. Its function is as follows. Catalyzes the attachment of valine to tRNA(Val). As ValRS can inadvertently accommodate and process structurally similar amino acids such as threonine, to avoid such errors, it has a 'posttransfer' editing activity that hydrolyzes mischarged Thr-tRNA(Val) in a tRNA-dependent manner. This is Valine--tRNA ligase from Thermoplasma volcanium (strain ATCC 51530 / DSM 4299 / JCM 9571 / NBRC 15438 / GSS1).